Reading from the N-terminus, the 265-residue chain is Small ribosomal subunit protein uS2 (265 aa).

The disordered stretch occupies residues 231-265 (VEEEYEDYEGAEDDYEYDETEYTDSVIPDDEEEAE).

This sequence belongs to the universal ribosomal protein uS2 family.

The chain is Small ribosomal subunit protein uS2 from Trichormus variabilis (strain ATCC 29413 / PCC 7937) (Anabaena variabilis).